The following is a 124-amino-acid chain: Cholera enterotoxin subunit B (124 aa).

Residues 1 to 21 (MIKLKFGVFFTVLLSSAYAHG) form the signal peptide. An intrachain disulfide couples cysteine 30 to cysteine 107.

In terms of assembly, the holotoxin (choleragen) consists of a pentameric ring of B subunits whose central pore is occupied by the A subunit. The A subunit contains two chains, A1 and A2, linked by a disulfide bridge.

It is found in the secreted. Its subcellular location is the host cell membrane. In terms of biological role, the B subunit pentameric ring directs the A subunit to its target by binding to the GM1 gangliosides present on the surface of the intestinal epithelial cells. It can bind five GM1 gangliosides. It has no toxic activity by itself. This is Cholera enterotoxin subunit B (ctxB) from Vibrio cholerae serotype O1 (strain ATCC 39315 / El Tor Inaba N16961).